A 183-amino-acid chain; its full sequence is Adenine phosphoribosyltransferase (183 aa).

The protein belongs to the purine/pyrimidine phosphoribosyltransferase family. In terms of assembly, homodimer.

The protein resides in the cytoplasm. The catalysed reaction is AMP + diphosphate = 5-phospho-alpha-D-ribose 1-diphosphate + adenine. The protein operates within purine metabolism; AMP biosynthesis via salvage pathway; AMP from adenine: step 1/1. Its function is as follows. Catalyzes a salvage reaction resulting in the formation of AMP, that is energically less costly than de novo synthesis. This chain is Adenine phosphoribosyltransferase, found in Corynebacterium kroppenstedtii (strain DSM 44385 / JCM 11950 / CIP 105744 / CCUG 35717).